A 223-amino-acid polypeptide reads, in one-letter code: MTEPAAHFASHAAAARTLRIWDISPPLDERSEVFPGDTAYSQELHFSLSPGCPVNVNRITLSPHTGAHADAPLHYASGEAAIGAVDLQPYLGPCRVIHCLDCGPLVEPAHIAHALENLPPRVLLRTSRTASQSWASFTAIAPATLALLATKNIVLIGIDTPSVDPAASQNLPSHQQLLRHGLRVLENLVLDDVPEGDYELIALPLKLMRADASPVRAILRELS.

Phe34 is a binding site for substrate. Residues His64, His68, and Asp70 each contribute to the Zn(2+) site. The active-site Proton donor/acceptor is the His74. Zn(2+) is bound by residues His174 and Glu186.

It belongs to the Cyclase 1 superfamily. KynB family. In terms of assembly, homodimer. Zn(2+) is required as a cofactor.

It carries out the reaction N-formyl-L-kynurenine + H2O = L-kynurenine + formate + H(+). It functions in the pathway amino-acid degradation; L-tryptophan degradation via kynurenine pathway; L-kynurenine from L-tryptophan: step 2/2. Functionally, catalyzes the hydrolysis of N-formyl-L-kynurenine to L-kynurenine, the second step in the kynurenine pathway of tryptophan degradation. This Polaromonas naphthalenivorans (strain CJ2) protein is Kynurenine formamidase.